The chain runs to 213 residues: MHHHQNLGDAAAMNGMIPPYEAMAMYEQPKPRFIFKMPRVVPDQRSKFDSDELFRRLSRESEVRYTGYRERAMEERRMRFVNDCRKGYAEISMVASGTNLQLYFNANHNPYAQEQDCDFERERGKVHLRSSFIMNGVCVRFRGWVDLDRLDGAACLEFDEQRAQQEDAQLQEQIQSYNQRMAESRRIYHTPQTPPEDHHHRGGPGLPRGPMGW.

A disordered region spans residues 189–213; sequence HTPQTPPEDHHHRGGPGLPRGPMGW. A compositionally biased stretch (gly residues) spans 203–213; the sequence is GPGLPRGPMGW.

Belongs to the CBF-beta family.

It is found in the nucleus. Regulates the DNA-binding properties of Runt. In Drosophila melanogaster (Fruit fly), this protein is Protein brother (Bro).